The primary structure comprises 95 residues: Large ribosomal subunit protein bL25 (95 aa).

This sequence belongs to the bacterial ribosomal protein bL25 family. In terms of assembly, part of the 50S ribosomal subunit; part of the 5S rRNA/L5/L18/L25 subcomplex. Contacts the 5S rRNA. Binds to the 5S rRNA independently of L5 and L18.

This is one of the proteins that binds to the 5S RNA in the ribosome where it forms part of the central protuberance. In Actinobacillus succinogenes (strain ATCC 55618 / DSM 22257 / CCUG 43843 / 130Z), this protein is Large ribosomal subunit protein bL25.